The following is a 347-amino-acid chain: Phosphoribosylformylglycinamidine cyclo-ligase (347 aa).

Belongs to the AIR synthase family.

It localises to the cytoplasm. It carries out the reaction 2-formamido-N(1)-(5-O-phospho-beta-D-ribosyl)acetamidine + ATP = 5-amino-1-(5-phospho-beta-D-ribosyl)imidazole + ADP + phosphate + H(+). Its pathway is purine metabolism; IMP biosynthesis via de novo pathway; 5-amino-1-(5-phospho-D-ribosyl)imidazole from N(2)-formyl-N(1)-(5-phospho-D-ribosyl)glycinamide: step 2/2. This chain is Phosphoribosylformylglycinamidine cyclo-ligase, found in Dechloromonas aromatica (strain RCB).